A 953-amino-acid polypeptide reads, in one-letter code: Isoleucine--tRNA ligase (953 aa).

A 'HIGH' region motif is present at residues 61–71 (PYANGALHIGH). Glu-564 is an L-isoleucyl-5'-AMP binding site. A 'KMSKS' region motif is present at residues 605 to 609 (KMSKS). Lys-608 lines the ATP pocket. Residues Cys-922, Cys-925, Cys-942, and Cys-945 each contribute to the Zn(2+) site.

It belongs to the class-I aminoacyl-tRNA synthetase family. IleS type 1 subfamily. Monomer. Requires Zn(2+) as cofactor.

Its subcellular location is the cytoplasm. The enzyme catalyses tRNA(Ile) + L-isoleucine + ATP = L-isoleucyl-tRNA(Ile) + AMP + diphosphate. In terms of biological role, catalyzes the attachment of isoleucine to tRNA(Ile). As IleRS can inadvertently accommodate and process structurally similar amino acids such as valine, to avoid such errors it has two additional distinct tRNA(Ile)-dependent editing activities. One activity is designated as 'pretransfer' editing and involves the hydrolysis of activated Val-AMP. The other activity is designated 'posttransfer' editing and involves deacylation of mischarged Val-tRNA(Ile). The protein is Isoleucine--tRNA ligase of Thermosynechococcus vestitus (strain NIES-2133 / IAM M-273 / BP-1).